Here is a 180-residue protein sequence, read N- to C-terminus: uncharacterized protein (180 aa).

Belongs to the CdaR family.

This is an uncharacterized protein from Thermomonospora curvata.